The primary structure comprises 414 residues: Tryptophan synthase beta chain (414 aa).

At lysine 109 the chain carries N6-(pyridoxal phosphate)lysine.

The protein belongs to the TrpB family. As to quaternary structure, tetramer of two alpha and two beta chains. It depends on pyridoxal 5'-phosphate as a cofactor.

The catalysed reaction is (1S,2R)-1-C-(indol-3-yl)glycerol 3-phosphate + L-serine = D-glyceraldehyde 3-phosphate + L-tryptophan + H2O. It functions in the pathway amino-acid biosynthesis; L-tryptophan biosynthesis; L-tryptophan from chorismate: step 5/5. Its function is as follows. The beta subunit is responsible for the synthesis of L-tryptophan from indole and L-serine. The chain is Tryptophan synthase beta chain from Prochlorococcus marinus (strain AS9601).